Reading from the N-terminus, the 357-residue chain is Glucose-6-phosphatase catalytic subunit 1 (357 aa).

The Lumenal segment spans residues 1 to 28; it reads MEKGMNVLHDFGIQSTHYLQVNYQDSQD. A helical membrane pass occupies residues 29–49; sequence WFILVSVIADLRNAFYVLFPI. Residues 50–60 lie on the Cytoplasmic side of the membrane; the sequence is WFHLREAVGIK. Residues 61-81 form a helical membrane-spanning segment; that stretch reads LLWVAVIGDWLNLVFKWILFG. Topologically, residues 82-117 are lumenal; it reads QRPYWWVMDTDYYSNASVPLIKQFPVTCETGPGSPS. Arginine 83 lines the substrate pocket. Asparagine 96 is a glycosylation site (N-linked (GlcNAc...) asparagine). A helical membrane pass occupies residues 118–138; the sequence is GHAMGTAGVYYVMVTSTLSMF. The active-site Proton donor is histidine 119. Residues 139 to 147 are Cytoplasmic-facing; the sequence is RGKKKPTYR. Residues 148 to 168 form a helical membrane-spanning segment; the sequence is FRCLNVILWLGFWAVQLNVCL. Topologically, residues 169-170 are lumenal; the sequence is SR. Arginine 170 provides a ligand contact to substrate. The helical transmembrane segment at 171–191 threads the bilayer; it reads IYLAAHFPHQVVAGVLSGIAV. Residue histidine 176 is the Nucleophile of the active site. The Cytoplasmic segment spans residues 192 to 209; sequence AETFRHIQSIYNASLKKY. A helical membrane pass occupies residues 210–230; that stretch reads FFITFFLLSFAIGFYLLLKGL. Residues 231-254 lie on the Lumenal side of the membrane; sequence GVDLLWTLEKARRWCERPEWVHID. The helical transmembrane segment at 255–275 threads the bilayer; the sequence is TTPFASLLKNVGTLFGLGLAL. Residues 276-291 are Cytoplasmic-facing; the sequence is NSSMYRESCKGTLSKW. The helical transmembrane segment at 292 to 312 threads the bilayer; sequence FPFRLSCIVVSLILLHLFDSL. Topologically, residues 313-320 are lumenal; the sequence is KPPSQIEL. A helical transmembrane segment spans residues 321 to 341; the sequence is IFYVLSFCKSAAVPLASVSLI. Topologically, residues 342 to 357 are cytoplasmic; it reads PYCLARVLGQPDKKSL. The short motif at 354 to 357 is the Prevents secretion from ER element; it reads KKSL.

Belongs to the glucose-6-phosphatase family.

It localises to the endoplasmic reticulum membrane. The catalysed reaction is D-glucose 6-phosphate + H2O = D-glucose + phosphate. It functions in the pathway carbohydrate biosynthesis; gluconeogenesis. Hydrolyzes glucose-6-phosphate to glucose in the endoplasmic reticulum. Forms with the glucose-6-phosphate transporter (SLC37A4/G6PT) the complex responsible for glucose production in the terminal step of glycogenolysis and gluconeogenesis. Hence, it is the key enzyme in homeostatic regulation of blood glucose levels. This Felis catus (Cat) protein is Glucose-6-phosphatase catalytic subunit 1 (G6PC1).